Here is a 335-residue protein sequence, read N- to C-terminus: Phosphate acyltransferase (335 aa).

This sequence belongs to the PlsX family. As to quaternary structure, homodimer. Probably interacts with PlsY.

Its subcellular location is the cytoplasm. The catalysed reaction is a fatty acyl-[ACP] + phosphate = an acyl phosphate + holo-[ACP]. It participates in lipid metabolism; phospholipid metabolism. Catalyzes the reversible formation of acyl-phosphate (acyl-PO(4)) from acyl-[acyl-carrier-protein] (acyl-ACP). This enzyme utilizes acyl-ACP as fatty acyl donor, but not acyl-CoA. In Leptospira interrogans serogroup Icterohaemorrhagiae serovar copenhageni (strain Fiocruz L1-130), this protein is Phosphate acyltransferase.